The primary structure comprises 422 residues: Glucose-1-phosphate adenylyltransferase (422 aa).

Alpha-D-glucose 1-phosphate is bound by residues Tyr110, Gly175, 190–191 (EK), and Ser208.

The protein belongs to the bacterial/plant glucose-1-phosphate adenylyltransferase family. As to quaternary structure, homotetramer.

The enzyme catalyses alpha-D-glucose 1-phosphate + ATP + H(+) = ADP-alpha-D-glucose + diphosphate. It participates in glycan biosynthesis; glycogen biosynthesis. In terms of biological role, involved in the biosynthesis of ADP-glucose, a building block required for the elongation reactions to produce glycogen. Catalyzes the reaction between ATP and alpha-D-glucose 1-phosphate (G1P) to produce pyrophosphate and ADP-Glc. The protein is Glucose-1-phosphate adenylyltransferase of Hydrogenovibrio crunogenus (strain DSM 25203 / XCL-2) (Thiomicrospira crunogena).